The sequence spans 394 residues: C-19 steroid 1alpha-hydroxylase (394 aa).

The heme b site is built by H81, R85, R281, G335, H338, and C340.

The protein belongs to the cytochrome P450 family. The cofactor is heme b.

It carries out the reaction testosterone + 2 reduced [2Fe-2S]-[ferredoxin] + O2 + 2 H(+) = 1alpha-hydroxytestosterone + 2 oxidized [2Fe-2S]-[ferredoxin] + H2O. The enzyme catalyses androst-4-ene-3,17-dione + 2 reduced [2Fe-2S]-[ferredoxin] + O2 + 2 H(+) = 1alpha-hydroxyandrost-4-ene-3,17-dione + 2 oxidized [2Fe-2S]-[ferredoxin] + H2O. In terms of biological role, hydroxylase that can catalyze the in vitro conversion of the sesquiterpenoid nootkatone, a natural organic compound produced by some plants, to at least five hydrophilic products. The native ferredoxin reductase FdR_B and either Fdx2 or Fdx8 ferredoxins can act as the redox partners for the conversion of nootkatone. Functionally, in addition, acts as a steroid 1alpha-hydroxylase, when associated in vitro with the surrogate redox partners bovine adrenodoxin (Adx) and adrenodoxin reductase (Adr). Acts on several C-19 steroid substrates, including testosterone and androstenedione, which are hydroxylated to 1alpha-hydroxytestosterone and 1alpha-hydroxyandrostenedione, respectively. Can use their derivatives testosterone-acetate and 11-oxoandrostenedione, but not vitamin D3 and 25-hydroxyvitamin D3. Also catalyzes the hydroxylation of the C-21 steroid 11-deoxycorticosterone to 1alpha-hydroxy-11-deoxycorticosterone. Catalyzes the hydroxylation of the C-21 steroid progesterone, leading to the formation of seven products: two major (1alpha-hydroxyprogesterone and 17alpha-hydroxyprogesterone) and five minor products. This is C-19 steroid 1alpha-hydroxylase from Sorangium cellulosum (strain So ce56) (Polyangium cellulosum (strain So ce56)).